The primary structure comprises 273 residues: Proteasome subunit beta type-5-B (273 aa).

The propeptide at 1–57 (MKLDTSGLETTMPVIGFGSNSEMLDGFSSAPSFDLPRTTDFDGFQKKAVEMVKPAKG) is removed in mature form. Catalysis depends on T58, which acts as the Nucleophile.

This sequence belongs to the peptidase T1B family. Component of the 20S core complex of the 26S proteasome. The 26S proteasome is composed of a core protease (CP), known as the 20S proteasome, capped at one or both ends by the 19S regulatory particle (RP/PA700). The 20S proteasome core is composed of 28 subunits that are arranged in four stacked rings, resulting in a barrel-shaped structure. The two end rings are each formed by seven alpha subunits, and the two central rings are each formed by seven beta subunits. The catalytic chamber with the active sites is on the inside of the barrel.

Its subcellular location is the cytoplasm. It localises to the nucleus. The catalysed reaction is Cleavage of peptide bonds with very broad specificity.. The proteasome is a multicatalytic proteinase complex which is characterized by its ability to cleave peptides with Arg, Phe, Tyr, Leu, and Glu adjacent to the leaving group at neutral or slightly basic pH. The proteasome has an ATP-dependent proteolytic activity. The protein is Proteasome subunit beta type-5-B (PBE2) of Arabidopsis thaliana (Mouse-ear cress).